We begin with the raw amino-acid sequence, 512 residues long: GMP synthase [glutamine-hydrolyzing] (512 aa).

Residues 6 to 195 (KIIILDFGSQ…VFNICGCQPK (190 aa)) enclose the Glutamine amidotransferase type-1 domain. Residue Cys-83 is the Nucleophile of the active site. Catalysis depends on residues His-169 and Glu-171. Residues 196-387 (WKITEFISAA…LGIDFKFVYK (192 aa)) enclose the GMPS ATP-PPase domain. 223–229 (SGGVDSS) contacts ATP.

As to quaternary structure, homodimer.

It carries out the reaction XMP + L-glutamine + ATP + H2O = GMP + L-glutamate + AMP + diphosphate + 2 H(+). The protein operates within purine metabolism; GMP biosynthesis; GMP from XMP (L-Gln route): step 1/1. In terms of biological role, catalyzes the synthesis of GMP from XMP. This is GMP synthase [glutamine-hydrolyzing] from Spiroplasma kunkelii.